The sequence spans 100 residues: Small ribosomal subunit protein uS14c (100 aa).

Belongs to the universal ribosomal protein uS14 family. As to quaternary structure, part of the 30S ribosomal subunit.

It is found in the plastid. The protein localises to the chloroplast. Its function is as follows. Binds 16S rRNA, required for the assembly of 30S particles. In Huperzia lucidula (Shining clubmoss), this protein is Small ribosomal subunit protein uS14c.